A 118-amino-acid polypeptide reads, in one-letter code: MRVKNAVNAKKKRRKILKAVKGYHGALSRRYRLAKQAYIKAKKHAYVGRKLKKRDFRKLWITRINIAARNEGLKYNELIHGLKLAGVAINRKMLSELAVNDPESFKEYVNIAKQAIGK.

The protein belongs to the bacterial ribosomal protein bL20 family.

Its function is as follows. Binds directly to 23S ribosomal RNA and is necessary for the in vitro assembly process of the 50S ribosomal subunit. It is not involved in the protein synthesizing functions of that subunit. The sequence is that of Large ribosomal subunit protein bL20 from Thermosipho africanus (strain TCF52B).